Reading from the N-terminus, the 40-residue chain is Protein P4 (40 aa).

Residues 10-29 (KYFAYGVAISAAGAILAEYV) traverse the membrane as a helical segment.

It is found in the virion membrane. May interact with the viral DNA. The chain is Protein P4 (IV) from Pseudoalteromonas phage PM2 (Bacteriophage PM2).